A 196-amino-acid chain; its full sequence is Ribosome maturation factor RimP (196 aa).

The segment at 164–196 (LAPQKPNKPGPKKPGHEKKKPSNESAAGKPRAE) is disordered. The segment covering 173-182 (GPKKPGHEKK) has biased composition (basic residues).

It belongs to the RimP family.

The protein localises to the cytoplasm. Its function is as follows. Required for maturation of 30S ribosomal subunits. The polypeptide is Ribosome maturation factor RimP (Xanthomonas axonopodis pv. citri (strain 306)).